We begin with the raw amino-acid sequence, 162 residues long: Caveolin-2 (162 aa).

The Cytoplasmic segment spans residues 1-86; sequence MGLEKEKLEC…FELVKFIFYR (86 aa). The helical intramembrane region spans 87–107; it reads LLTTLLAVPAAFILGVVFGVL. The Cytoplasmic portion of the chain corresponds to 108–162; that stretch reads SCIHIWLVMPVTRSFLMLLPSIQVVWKSVTDMFITPLFHSMGRSLSSIQVRTSDT.

The protein belongs to the caveolin family. As to quaternary structure, homooligomer.

The protein localises to the golgi apparatus membrane. Its subcellular location is the cell membrane. It is found in the membrane. It localises to the caveola. Its function is as follows. May act as a scaffolding protein within caveolar membranes. Interacts directly with G-protein alpha subunits and can functionally regulate their activity. The sequence is that of Caveolin-2 (cav2) from Takifugu rubripes (Japanese pufferfish).